The following is a 61-amino-acid chain: Photosystem II assembly protein Psb34 (61 aa).

The helical transmembrane segment at 36-56 (LIMAAITVVLVAGLIAVAVVA) threads the bilayer.

Belongs to the Psb34 family. Part of the photosystem II (PSII) assembly intermediate RC47 complex (with D1, D2, CP47, PsbE, PsbF, PsbH, Psb27 and Psb28); minor amounts are found in other PSII complexes, including mature, dimeric PSII with PsbO and PsbV. No HliA or HliB are detected in any of these complexes. Its interaction with PSII requires both CP47 (psbB) and PsbH. HliA/HliB and Psb34 probably bind to a similar site on CP47; their binding seems to be mutually exclusive.

It localises to the cellular thylakoid membrane. Functionally, involved in photosystem II (PSII) assembly and/or repair. Probably involved in conversion of late PSII assembly intermediates into mature dimeric PSII, it may mediate the optimal equlibrium of HliA/HliB among the intermediates containing CP47 (psbB) to facilitate photoprotection during assembly. The chain is Photosystem II assembly protein Psb34 from Synechocystis sp. (strain ATCC 27184 / PCC 6803 / Kazusa).